Here is a 29-residue protein sequence, read N- to C-terminus: Dermaseptin-J9 (29 aa).

In terms of tissue distribution, expressed by the skin glands.

Its subcellular location is the secreted. Functionally, has antimicrobial activity. The polypeptide is Dermaseptin-J9 (Phasmahyla jandaia (Jandaia leaf frog)).